The primary structure comprises 347 residues: Probable RNA methyltransferase azo0122 (347 aa).

Glutamate 89 acts as the Proton acceptor in catalysis. The Radical SAM core domain occupies 92-318; it reads LLLRDGLCVS…AKLRQSAGQD (227 aa). A disulfide bridge connects residues cysteine 99 and cysteine 323. [4Fe-4S] cluster-binding residues include cysteine 106, cysteine 110, and cysteine 113. S-adenosyl-L-methionine is bound by residues 151–152, serine 181, 204–206, and asparagine 280; these read GE and SLH. Cysteine 323 functions as the S-methylcysteine intermediate in the catalytic mechanism.

The protein belongs to the radical SAM superfamily. RlmN family. [4Fe-4S] cluster is required as a cofactor.

Its subcellular location is the cytoplasm. The sequence is that of Probable RNA methyltransferase azo0122 from Azoarcus sp. (strain BH72).